The following is a 414-amino-acid chain: STAGA complex 65 subunit gamma (414 aa).

The disordered stretch occupies residues 87–108; that stretch reads NQQQTEGVKTEESEPLPSCPGS. Residue serine 108 is modified to Phosphoserine. Lysine 271 is covalently cross-linked (Glycyl lysine isopeptide (Lys-Gly) (interchain with G-Cter in SUMO2)). A phosphoserine mark is found at serine 323 and serine 334. Residues 346–414 are disordered; the sequence is PQESEEGNVS…QRCKKRMRKI (69 aa). The segment covering 386 to 395 has biased composition (low complexity); sequence SSYGSHSTDS.

In terms of assembly, component of the STAGA transcription coactivator-HAT complex, at least composed of SUPT3H, SUPT7L, GCN5L2, TAF5L, TAF6L, TADA3L, TAD1L, TAF10, TAF12 and TAF9. In terms of processing, sumoylated. As to expression, expressed at high levels in adenocarcinomas and gliomas and low in esophageal cancers and malignant hematological disease. Also expressed at high level in the thymus, low in peripheral blood mononuclear cells, and lowest in the stomach, small intestine, and skeletal muscle.

The protein localises to the nucleus. This Homo sapiens (Human) protein is STAGA complex 65 subunit gamma (SUPT7L).